A 181-amino-acid chain; its full sequence is Protein Syd (181 aa).

It belongs to the Syd family.

The protein localises to the cell inner membrane. In terms of biological role, interacts with the SecY protein in vivo. May bind preferentially to an uncomplexed state of SecY, thus functioning either as a chelating agent for excess SecY in the cell or as a regulatory factor that negatively controls the translocase function. The sequence is that of Protein Syd from Enterobacter sp. (strain 638).